The chain runs to 265 residues: Shikimate dehydrogenase (NADP(+)) (265 aa).

Shikimate contacts are provided by residues 15-17 (SLS) and T62. Catalysis depends on K66, which acts as the Proton acceptor. Positions 87 and 102 each coordinate shikimate. Residues 125–129 (GAGGA), 149–154 (NRTLEK), and L209 each bind NADP(+). Y211 serves as a coordination point for shikimate. G233 serves as a coordination point for NADP(+).

It belongs to the shikimate dehydrogenase family. Homodimer.

The catalysed reaction is shikimate + NADP(+) = 3-dehydroshikimate + NADPH + H(+). It functions in the pathway metabolic intermediate biosynthesis; chorismate biosynthesis; chorismate from D-erythrose 4-phosphate and phosphoenolpyruvate: step 4/7. Its function is as follows. Involved in the biosynthesis of the chorismate, which leads to the biosynthesis of aromatic amino acids. Catalyzes the reversible NADPH linked reduction of 3-dehydroshikimate (DHSA) to yield shikimate (SA). The chain is Shikimate dehydrogenase (NADP(+)) from Legionella pneumophila subsp. pneumophila (strain Philadelphia 1 / ATCC 33152 / DSM 7513).